A 374-amino-acid chain; its full sequence is MKFELDTTDGRARRGRLIFDRGTVETPAFMPVGTYGTVKGMTPEEVRATGADILLGNTFHLWLRPGEEIMRKHGDLHDFMNWQRPILTDSGGFQVFSLGDIRKITEEGVHFRSPINGEKIFLDPEKSMQIQHALGSDVVMIFDECTPYPATEDEARKSMQMSLRWAKRSRDEFDRLENPNSLFGIIQGSVYEDLRDESLKGLVEIGFDGYAVGGLAVGEPKEDMHRILEHVCPQILADKPRYLMGVGKPEDLVEGVRRGIDMFDCVMPTRNARNGHLFTSEGVIKIRNARHRDDTSPLDPKCDCYTCKNYSRAYLYHLDRCNEILGARLNTIHNLRYYQMLMEGLRGAIETGTLDAFVKDFYTSQGREVPELVD.

Asp89 acts as the Proton acceptor in catalysis. Substrate contacts are provided by residues 89-93 (DSGGF), Asp143, Gln187, and Gly214. An RNA binding region spans residues 245-251 (GVGKPED). Asp264 serves as the catalytic Nucleophile. Residues 269–273 (TRNAR) are RNA binding; important for wobble base 34 recognition. Positions 302, 304, 307, and 333 each coordinate Zn(2+).

The protein belongs to the queuine tRNA-ribosyltransferase family. As to quaternary structure, homodimer. Within each dimer, one monomer is responsible for RNA recognition and catalysis, while the other monomer binds to the replacement base PreQ1. Requires Zn(2+) as cofactor.

It carries out the reaction 7-aminomethyl-7-carbaguanine + guanosine(34) in tRNA = 7-aminomethyl-7-carbaguanosine(34) in tRNA + guanine. Its pathway is tRNA modification; tRNA-queuosine biosynthesis. Its function is as follows. Catalyzes the base-exchange of a guanine (G) residue with the queuine precursor 7-aminomethyl-7-deazaguanine (PreQ1) at position 34 (anticodon wobble position) in tRNAs with GU(N) anticodons (tRNA-Asp, -Asn, -His and -Tyr). Catalysis occurs through a double-displacement mechanism. The nucleophile active site attacks the C1' of nucleotide 34 to detach the guanine base from the RNA, forming a covalent enzyme-RNA intermediate. The proton acceptor active site deprotonates the incoming PreQ1, allowing a nucleophilic attack on the C1' of the ribose to form the product. After dissociation, two additional enzymatic reactions on the tRNA convert PreQ1 to queuine (Q), resulting in the hypermodified nucleoside queuosine (7-(((4,5-cis-dihydroxy-2-cyclopenten-1-yl)amino)methyl)-7-deazaguanosine). This is Queuine tRNA-ribosyltransferase from Shewanella oneidensis (strain ATCC 700550 / JCM 31522 / CIP 106686 / LMG 19005 / NCIMB 14063 / MR-1).